Here is a 313-residue protein sequence, read N- to C-terminus: Formate-nitrite transporter (313 aa).

Residues methionine 1–alanine 46 are Cytoplasmic-facing. Residues isoleucine 47–phenylalanine 67 traverse the membrane as a helical segment. Topologically, residues tyrosine 68–glycine 77 are extracellular. The helical transmembrane segment at isoleucine 78 to alanine 98 threads the bilayer. Residues threonine 99–arginine 127 lie on the Cytoplasmic side of the membrane. A helical transmembrane segment spans residues valine 128–serine 148. Residues histidine 149 to cysteine 184 lie on the Extracellular side of the membrane. The chain crosses the membrane as a helical span at residues valine 185 to isoleucine 205. Residues lysine 206–glycine 210 are Cytoplasmic-facing. A helical transmembrane segment spans residues methionine 211 to isoleucine 231. Over alanine 232–asparagine 256 the chain is Extracellular. The helical transmembrane segment at leucine 257–phenylalanine 277 threads the bilayer. The Cytoplasmic segment spans residues tyrosine 278–arginine 313. The interval threonine 290–arginine 313 is disordered. Positions glycine 298–arginine 313 are enriched in polar residues.

It belongs to the FNT transporter (TC 1.A.16) family. Homopentamer.

The protein localises to the cell membrane. The protein resides in the vacuole membrane. It carries out the reaction (S)-lactate(in) + H(+)(in) = (S)-lactate(out) + H(+)(out). The catalysed reaction is formate(in) + H(+)(in) = formate(out) + H(+)(out). The enzyme catalyses pyruvate(out) + H(+)(out) = pyruvate(in) + H(+)(in). It catalyses the reaction acetate(out) + H(+)(out) = acetate(in) + H(+)(in). Its activity is regulated as follows. Inhibited by the Malaria Box compound MMV007839 and its derivatives BH296 and BH267.meta. In terms of biological role, monocarboxylate-proton symporter that mediates the efflux of the waste product lactate in the intraerythrocytic parasites; active in acidic-to-neutral pH range. Transports L-lactate. The sequence is that of Formate-nitrite transporter from Plasmodium vivax.